The sequence spans 153 residues: 3-hydroxyacyl-[acyl-carrier-protein] dehydratase FabZ (153 aa).

Residue His54 is part of the active site.

Belongs to the thioester dehydratase family. FabZ subfamily.

It is found in the cytoplasm. It catalyses the reaction a (3R)-hydroxyacyl-[ACP] = a (2E)-enoyl-[ACP] + H2O. In terms of biological role, involved in unsaturated fatty acids biosynthesis. Catalyzes the dehydration of short chain beta-hydroxyacyl-ACPs and long chain saturated and unsaturated beta-hydroxyacyl-ACPs. This is 3-hydroxyacyl-[acyl-carrier-protein] dehydratase FabZ from Chlamydia muridarum (strain MoPn / Nigg).